A 594-amino-acid polypeptide reads, in one-letter code: UvrABC system protein C (594 aa).

A GIY-YIG domain is found at 14–91; the sequence is DQPGCYLMKD…IKKYDPKYNI (78 aa). A UVR domain is found at 196 to 231; sequence KEVRSELEIKMYEASEKLEFERAKELRDQIAHIDAI.

This sequence belongs to the UvrC family. As to quaternary structure, interacts with UvrB in an incision complex.

It is found in the cytoplasm. In terms of biological role, the UvrABC repair system catalyzes the recognition and processing of DNA lesions. UvrC both incises the 5' and 3' sides of the lesion. The N-terminal half is responsible for the 3' incision and the C-terminal half is responsible for the 5' incision. In Bacillus cereus (strain G9842), this protein is UvrABC system protein C.